Consider the following 700-residue polypeptide: Calpain-2 catalytic subunit (700 aa).

An N-acetylalanine modification is found at alanine 2. Positions 2–19 (AGIAAKLAKDREAAEGLG) are cleaved as a propeptide — anchors to the small subunit. Residues 45-344 (LFQDPSFPAL…YSRLEICNLT (300 aa)) enclose the Calpain catalytic domain. Residues glycine 91 and aspartate 96 each coordinate Ca(2+). The active site involves cysteine 105. Residues glutamate 175, glutamine 229, and lysine 230 each coordinate Ca(2+). Catalysis depends on residues histidine 262 and asparagine 286. 3 residues coordinate Ca(2+): glutamate 292, aspartate 299, and glutamate 323. Positions 345–514 (PDTLTSDSYK…KKADYQVVDD (170 aa)) are domain III. The linker stretch occupies residues 515 to 529 (EIEANIDEIDISEDD). The tract at residues 530–700 (IDDGFRRLFA…LISWLSFSVL (171 aa)) is domain IV. Ca(2+)-binding residues include alanine 542, aspartate 545, glutamate 547, glutamate 552, aspartate 585, aspartate 587, serine 589, lysine 591, glutamate 596, aspartate 615, aspartate 617, serine 619, threonine 621, glutamate 626, aspartate 658, and asparagine 661. 3 consecutive EF-hand domains span residues 572-597 (FSIE…LKEF), 602-637 (TKIQ…AGFK), and 652-672 (DDDL…LETL).

The protein belongs to the peptidase C2 family. As to quaternary structure, forms a heterodimer with a small (regulatory) subunit (CAPNS1). Interacts with CPEB3; this leads to cleavage of CPEB3. Ca(2+) serves as cofactor. Ubiquitous.

It is found in the cytoplasm. Its subcellular location is the cell membrane. The enzyme catalyses Broad endopeptidase specificity.. Activated by 200-1000 micromolar concentrations of calcium and inhibited by calpastatin. Calcium-regulated non-lysosomal thiol-protease which catalyzes limited proteolysis of substrates involved in cytoskeletal remodeling and signal transduction. Proteolytically cleaves MYOC at 'Arg-226'. Proteolytically cleaves CPEB3 following neuronal stimulation which abolishes CPEB3 translational repressor activity, leading to translation of CPEB3 target mRNAs. This chain is Calpain-2 catalytic subunit (CAPN2), found in Bos taurus (Bovine).